The following is a 100-amino-acid chain: Small ribosomal subunit protein uS14c (100 aa).

Belongs to the universal ribosomal protein uS14 family. Part of the 30S ribosomal subunit.

Its subcellular location is the plastid. It localises to the chloroplast. In terms of biological role, binds 16S rRNA, required for the assembly of 30S particles. The polypeptide is Small ribosomal subunit protein uS14c (Buxus microphylla (Littleleaf boxwood)).